The primary structure comprises 428 residues: CRISPR system endoribonuclease Csm6 (428 aa).

The interval 1-145 (MKILISAVGT…RANREYTALT (145 aa)) is CARF domain. The HEPN domain stretch occupies residues 146-428 (ESEIDALIME…QNKELIKMLE (283 aa)).

The protein belongs to the CRISPR-associated Csm6 family. In terms of assembly, homodimer. The composite ssRNase active site is formed at the dimer interface.

Its activity is regulated as follows. Non-specific ssRNase activity is allosterically activated about 1000-fold by cyclic hexaadenylate (cA6), a second messenger produced by Cas10 of the ternary Csm effector complex in the presence of a cognate target RNA. ssRNase activity is inhibited by physiological concentrations of ATP (1 mM), activity is restored by cOA. Functionally, CRISPR (clustered regularly interspaced short palindromic repeat) is an adaptive immune system that provides protection against mobile genetic elements (viruses, transposable elements and conjugative plasmids). CRISPR clusters contain spacers, sequences complementary to antecedent mobile elements, and target invading nucleic acids. CRISPR clusters are transcribed and processed into CRISPR RNA (crRNA). The type III-A Csm complex binds crRNA and acts as a crRNA-guided RNase, DNase and cyclic oligoadenylate synthase; binding of target RNA cognate to the crRNA is required for all activities. In a heterologous host this Csm effector complex restricts ssRNA phage MS2, suggesting it may target RNA viruses in vivo. This protein is not part of the Csm complex. Its function is as follows. Csm functions as a non-specific ssDNase. Base-pairing between crRNA and target RNA to form a ternary Csm complex activates a ssDNase activity; target RNA cleavage suppresses the ssDNase, a temporal control that prevents uncontrolled DNA degradation. Viral RNA transcripts probably tether the Csm complex to the viral genome, recruiting Cas10 ssDNA activity which is able to degrade DNA in the transcription bubble, spatially controlling the DNase activity. In terms of biological role, a single-strand-specific endoribonuclease (ssRNase) that is approximately 1000-fold stimulated by cyclic oligoadenylate (cOA); although several species of cOA are synthesized by this organism only cyclic hexaadenylate (cA6) stimulates the ssRNase activity. Cleaves preferentially within GA or AA dinucleotides, although the presence of cA6 broadens the preference. Linear oligoadenylates do not activate the RNase. The chain is CRISPR system endoribonuclease Csm6 from Streptococcus thermophilus.